A 95-amino-acid chain; its full sequence is Aspartyl/glutamyl-tRNA(Asn/Gln) amidotransferase subunit C (95 aa).

The protein belongs to the GatC family. Heterotrimer of A, B and C subunits.

The catalysed reaction is L-glutamyl-tRNA(Gln) + L-glutamine + ATP + H2O = L-glutaminyl-tRNA(Gln) + L-glutamate + ADP + phosphate + H(+). It catalyses the reaction L-aspartyl-tRNA(Asn) + L-glutamine + ATP + H2O = L-asparaginyl-tRNA(Asn) + L-glutamate + ADP + phosphate + 2 H(+). Allows the formation of correctly charged Asn-tRNA(Asn) or Gln-tRNA(Gln) through the transamidation of misacylated Asp-tRNA(Asn) or Glu-tRNA(Gln) in organisms which lack either or both of asparaginyl-tRNA or glutaminyl-tRNA synthetases. The reaction takes place in the presence of glutamine and ATP through an activated phospho-Asp-tRNA(Asn) or phospho-Glu-tRNA(Gln). The polypeptide is Aspartyl/glutamyl-tRNA(Asn/Gln) amidotransferase subunit C (Methylorubrum populi (strain ATCC BAA-705 / NCIMB 13946 / BJ001) (Methylobacterium populi)).